The following is a 371-amino-acid chain: NADP-dependent oxidoreductase lnaE (371 aa).

NADP(+)-binding positions include 172-175 (DEIG), Lys198, Tyr214, Asn237, 277-283 (YGTIAEQ), and 307-309 (FGL).

Belongs to the NADP-dependent oxidoreductase L4BD family.

The protein operates within secondary metabolite biosynthesis. Functionally, NADP-dependent oxidoreductase; part of the lna gene cluster that mediates the biosynthesis of diastereomeric piperazines. Lna and lnb clusters encode sets of enzymes that produce overlapping sets of previously undescribed metabolites such as piperazinomycin-like metabolites or morpholine. The lna and lnb biosynthetic pathways appear to be part of a signaling network that controls the formation of sclerotia, a resilient overwintering structure. One primary function of the non-canonical nonribosomal peptide synthetases lnaA and lnbA consists in the reduction of L-tyrosine. The presence in the clusters of tailoring enzymes such as the oxidoreductases lnaB, lnbB, lnaE or lnbE, as well as of the cytochrome P450 monooxygenases lnaC, lnaD, or lnbC, might explain formation of various diastereomeric piperazines. The polypeptide is NADP-dependent oxidoreductase lnaE (Aspergillus flavus (strain ATCC 200026 / FGSC A1120 / IAM 13836 / NRRL 3357 / JCM 12722 / SRRC 167)).